Here is a 62-residue protein sequence, read N- to C-terminus: DNA-directed RNA polymerase subunit Rpo10 (62 aa).

Zn(2+)-binding residues include Cys-6, Cys-9, Cys-43, and Cys-44.

This sequence belongs to the archaeal Rpo10/eukaryotic RPB10 RNA polymerase subunit family. Part of the RNA polymerase complex. The cofactor is Zn(2+).

Its subcellular location is the cytoplasm. The enzyme catalyses RNA(n) + a ribonucleoside 5'-triphosphate = RNA(n+1) + diphosphate. Functionally, DNA-dependent RNA polymerase (RNAP) catalyzes the transcription of DNA into RNA using the four ribonucleoside triphosphates as substrates. The chain is DNA-directed RNA polymerase subunit Rpo10 from Methanosarcina mazei (strain ATCC BAA-159 / DSM 3647 / Goe1 / Go1 / JCM 11833 / OCM 88) (Methanosarcina frisia).